A 116-amino-acid polypeptide reads, in one-letter code: UPF0102 protein Neut_1662 (116 aa).

It belongs to the UPF0102 family.

The protein is UPF0102 protein Neut_1662 of Nitrosomonas eutropha (strain DSM 101675 / C91 / Nm57).